A 79-amino-acid chain; its full sequence is Acyl carrier protein (79 aa).

Positions Ala-2–Ala-79 constitute a Carrier domain. At Ser-40 the chain carries O-(pantetheine 4'-phosphoryl)serine.

Belongs to the acyl carrier protein (ACP) family. Post-translationally, 4'-phosphopantetheine is transferred from CoA to a specific serine of apo-ACP by AcpS. This modification is essential for activity because fatty acids are bound in thioester linkage to the sulfhydryl of the prosthetic group.

It is found in the cytoplasm. It functions in the pathway lipid metabolism; fatty acid biosynthesis. In terms of biological role, carrier of the growing fatty acid chain in fatty acid biosynthesis. The protein is Acyl carrier protein of Myxococcus xanthus.